The chain runs to 349 residues: Heme A synthase (349 aa).

Transmembrane regions (helical) follow at residues 15 to 35 (AVQV…VVGG), 101 to 121 (LLGR…ALTG), 132 to 152 (FGLF…VASG), 162 to 182 (YRLA…VAVA), and 203 to 223 (VLVG…GLDA). A heme-binding site is contributed by His-265. A run of 3 helical transmembrane segments spans residues 268-288 (IAYL…RLGG), 296-316 (LVFA…VHMV), and 317-337 (PLDL…AAMI). Heme is bound at residue His-324.

The protein belongs to the COX15/CtaA family. Type 2 subfamily. In terms of assembly, interacts with CtaB. Heme b serves as cofactor.

The protein resides in the cell membrane. It catalyses the reaction Fe(II)-heme o + 2 A + H2O = Fe(II)-heme a + 2 AH2. It functions in the pathway porphyrin-containing compound metabolism; heme A biosynthesis; heme A from heme O: step 1/1. Catalyzes the conversion of heme O to heme A by two successive hydroxylations of the methyl group at C8. The first hydroxylation forms heme I, the second hydroxylation results in an unstable dihydroxymethyl group, which spontaneously dehydrates, resulting in the formyl group of heme A. The chain is Heme A synthase from Azorhizobium caulinodans (strain ATCC 43989 / DSM 5975 / JCM 20966 / LMG 6465 / NBRC 14845 / NCIMB 13405 / ORS 571).